A 106-amino-acid chain; its full sequence is Iron-sulfur cluster assembly protein CyaY (106 aa).

Belongs to the frataxin family. As to quaternary structure, interacts with IscS. Certain pairs of proteins can bind simultaneously to IscS; IscS-IscU-CyaY complexes can be isolated in vitro, but (IscS-TusA-CyaY) complexes cannot.

Involved in iron-sulfur (Fe-S) cluster assembly. May act as a regulator of Fe-S biogenesis. This Escherichia coli O157:H7 protein is Iron-sulfur cluster assembly protein CyaY.